The sequence spans 2275 residues: Multifunctional protein pyrABCN (2275 aa).

The interval 1-440 (MPETVGHEEP…PGPRDTEYLF (440 aa)) is GATase (Glutamine amidotransferase). Positions 102, 313, and 315 each coordinate L-glutamine. The Glutamine amidotransferase type-1 domain occupies 265–453 (RVLCLDVGLK…INAIKDTIAS (189 aa)). The active-site Nucleophile; for GATase activity is the Cys-342. Positions 343, 346, 384, 386, and 387 each coordinate L-glutamine. Active-site for GATase activity residues include His-426 and Glu-428. The interval 441–482 (DVFINAIKDTIASPEALQKPVNFPGGAVAENIKASPRVSVKK) is linker. The segment at 483–1522 (VLILGSGGLS…TNVKNAKILI (1040 aa)) is CPSase (Carbamoyl-phosphate synthase). ATP-binding residues include Arg-600, Arg-640, Gly-646, Gly-647, Arg-677, Met-679, Glu-684, Gly-710, Ile-711, His-712, Gln-753, and Glu-767. ATP-grasp domains lie at 604–796 (ARSM…KLGL) and 1139–1330 (SRML…KAMI). Mg(2+) contacts are provided by Gln-753, Glu-767, and Asn-769. Residues Gln-753, Glu-767, and Asn-769 each contribute to the Mn(2+) site. ATP contacts are provided by Arg-1175, Lys-1214, Ile-1216, Glu-1221, Gly-1246, Val-1247, His-1248, Ser-1249, Gln-1289, and Glu-1301. Mg(2+) is bound by residues Gln-1289, Glu-1301, and Asn-1303. Mn(2+)-binding residues include Gln-1289, Glu-1301, and Asn-1303. The MGS-like domain maps to 1396 to 1575 (FKLPKRNILL…KDFEAVTKAS (180 aa)). A linker region spans residues 1523–1532 (EAIARHYALN). The tract at residues 1533-1862 (VQTIDYQTSH…FQGKTSCLDS (330 aa)) is defective DHOase domain. Residues 1863–1882 (EITPDAPKGSDMSGHRIVPA) are disordered. Residues 1863–1953 (EITPDAPKGS…LQMLSRSPFK (91 aa)) are linker. The ATCase (Aspartate transcarbamylase) stretch occupies residues 1954 to 2258 (QKHVLSVNQF…EFDMLMWMQM (305 aa)). Residues Arg-2006 and Thr-2007 each coordinate carbamoyl phosphate. Lys-2034 serves as a coordination point for L-aspartate. 3 residues coordinate carbamoyl phosphate: Arg-2055, His-2083, and Gln-2086. 2 residues coordinate L-aspartate: Arg-2116 and Arg-2178. Positions 2217 and 2218 each coordinate carbamoyl phosphate.

In the central section; belongs to the metallo-dependent hydrolases superfamily. DHOase family. CAD subfamily. It in the N-terminal section; belongs to the CarA family. This sequence in the 2nd section; belongs to the CarB family. The protein in the 3rd section; belongs to the metallo-dependent hydrolases superfamily. DHOase family. CAD subfamily. In the C-terminal section; belongs to the aspartate/ornithine carbamoyltransferase superfamily. ATCase family. Mg(2+) serves as cofactor. The cofactor is Mn(2+).

The catalysed reaction is hydrogencarbonate + L-glutamine + 2 ATP + H2O = carbamoyl phosphate + L-glutamate + 2 ADP + phosphate + 2 H(+). It carries out the reaction L-glutamine + H2O = L-glutamate + NH4(+). It catalyses the reaction hydrogencarbonate + NH4(+) + 2 ATP = carbamoyl phosphate + 2 ADP + phosphate + 2 H(+). The enzyme catalyses carbamoyl phosphate + L-aspartate = N-carbamoyl-L-aspartate + phosphate + H(+). The protein operates within pyrimidine metabolism; UMP biosynthesis via de novo pathway; (S)-dihydroorotate from bicarbonate: step 1/3. It functions in the pathway pyrimidine metabolism; UMP biosynthesis via de novo pathway; (S)-dihydroorotate from bicarbonate: step 2/3. In terms of biological role, multifunctional protein that encodes the first 2 enzymatic activities of the de novo pyrimidine pathway: carbamoylphosphate synthetase (CPSase; EC 6.3.5.5) and aspartate transcarbamylase (ATCase; EC 2.1.3.2). The CPSase-function is accomplished in 2 steps, by a glutamine-dependent amidotransferase activity (GATase) that binds and cleaves glutamine to produce ammonia, followed by an ammonium-dependent carbamoyl phosphate synthetase, which reacts with the ammonia, hydrogencarbonate and ATP to form carbamoyl phosphate. The endogenously produced carbamoyl phosphate is sequestered and channeled to the ATCase active site. ATCase then catalyzes the formation of carbamoyl-L-aspartate from L-aspartate and carbamoyl phosphate. This Emericella nidulans (strain FGSC A4 / ATCC 38163 / CBS 112.46 / NRRL 194 / M139) (Aspergillus nidulans) protein is Multifunctional protein pyrABCN.